A 64-amino-acid polypeptide reads, in one-letter code: MPKMKTDRGVAKRFKKTANGFKRKQAHLRHILTKKSTKRKRHLRAKCLVSKADVPAIARQLPYA.

Belongs to the bacterial ribosomal protein bL35 family.

The polypeptide is Large ribosomal subunit protein bL35 (Shewanella putrefaciens (strain CN-32 / ATCC BAA-453)).